We begin with the raw amino-acid sequence, 85 residues long: Beta-toxin BmKAS (85 aa).

Positions 1–19 are cleaved as a signal peptide; that stretch reads MKTVIFLIVSSLLLIGVKT. An LCN-type CS-alpha/beta domain is found at 20–82; sequence DNGYLLDKYT…LWNYNTNKCN (63 aa). 4 cysteine pairs are disulfide-bonded: Cys31-Cys81, Cys35-Cys56, Cys42-Cys63, and Cys46-Cys65.

Expressed by the venom gland.

The protein resides in the secreted. Beta toxins bind voltage-independently at site-4 of sodium channels (Nav) and shift the voltage of activation toward more negative potentials thereby affecting sodium channel activation and promoting spontaneous and repetitive firing. It binds to distinct receptor sites of mammal and insect voltage-gated sodium channels. It displays antinociceptive effect in rat models, which is due to its specific modulation of sodium channels of sensory neurons. It also significantly stimulates the binding of [3H]-ryanodine to ryanodine receptors on the sarcoplasmic reticulum of the skeletal muscle through an indirect mechanism. And it promotes noradrenaline release from the rat hippocampus slice. The protein is Beta-toxin BmKAS of Olivierus martensii (Manchurian scorpion).